Consider the following 48-residue polypeptide: Protein PsbN (48 aa).

The chain crosses the membrane as a helical span at residues 12-34; sequence LLIAMVTITFGLTGYGLYTAFGP.

This sequence belongs to the PsbN family.

The protein resides in the cellular thylakoid membrane. May play a role in photosystem I and II biogenesis. The protein is Protein PsbN of Prochlorococcus marinus (strain MIT 9313).